A 519-amino-acid chain; its full sequence is Glutamate--cysteine ligase (519 aa).

It belongs to the glutamate--cysteine ligase type 1 family. Type 1 subfamily.

It catalyses the reaction L-cysteine + L-glutamate + ATP = gamma-L-glutamyl-L-cysteine + ADP + phosphate + H(+). Its pathway is sulfur metabolism; glutathione biosynthesis; glutathione from L-cysteine and L-glutamate: step 1/2. This chain is Glutamate--cysteine ligase, found in Yersinia enterocolitica serotype O:8 / biotype 1B (strain NCTC 13174 / 8081).